Reading from the N-terminus, the 1031-residue chain is Putative glycine dehydrogenase (decarboxylating), mitochondrial (1031 aa).

The transit peptide at 1-49 (MFDSFMKRNQLALIMFRACSKLQYHGVNTSLSRHLFLAKRNLSISSACL) directs the protein to the mitochondrion. Lys783 carries the post-translational modification N6-(pyridoxal phosphate)lysine.

The protein belongs to the GcvP family. Requires pyridoxal 5'-phosphate as cofactor.

The protein resides in the mitochondrion. The enzyme catalyses N(6)-[(R)-lipoyl]-L-lysyl-[glycine-cleavage complex H protein] + glycine + H(+) = N(6)-[(R)-S(8)-aminomethyldihydrolipoyl]-L-lysyl-[glycine-cleavage complex H protein] + CO2. Functionally, the glycine cleavage system catalyzes the degradation of glycine. The P protein binds the alpha-amino group of glycine through its pyridoxal phosphate cofactor; CO(2) is released and the remaining methylamine moiety is then transferred to the lipoamide cofactor of the H protein. This is Putative glycine dehydrogenase (decarboxylating), mitochondrial (gcv2) from Schizosaccharomyces pombe (strain 972 / ATCC 24843) (Fission yeast).